Consider the following 353-residue polypeptide: Heterogeneous nuclear ribonucleoprotein D0 (353 aa).

Residues 1 to 89 (MSEEQFGGDG…SSPRHTEAAT (89 aa)) are disordered. An N-acetylserine modification is found at Ser-2. Residues 11–42 (AAAAATAAVGGSAGEQEGAMVAAAQGAAAAAG) are compositionally biased toward low complexity. Residues 43–56 (SGSGGGSAPGGTEG) are compositionally biased toward gly residues. A compositionally biased stretch (basic and acidic residues) spans 62-71 (EGAKIDASKN). At Ser-69 the chain carries Phosphoserine. A Glycyl lysine isopeptide (Lys-Gly) (interchain with G-Cter in SUMO2) cross-link involves residue Lys-70. Phosphoserine occurs at positions 78, 80, and 81. Thr-89 is subject to Phosphothreonine. RRM domains lie at 95-177 (WKMF…KTKE) and 180-259 (KKIF…MSKE). N6-methyllysine is present on Lys-117. Thr-125 bears the Phosphothreonine mark. Lys-127 is covalently cross-linked (Glycyl lysine isopeptide (Lys-Gly) (interchain with G-Cter in SUMO2)). N6-acetyllysine is present on Lys-163. The residue at position 188 (Ser-188) is a Phosphoserine. Position 191 is a phosphothreonine (Thr-191). Residue Lys-195 forms a Glycyl lysine isopeptide (Lys-Gly) (interchain with G-Cter in SUMO2) linkage. Residues Lys-241 and Lys-249 each carry the N6-acetyllysine modification. Ser-269 is subject to Phosphoserine. Arg-270, Arg-276, Arg-278, and Arg-280 each carry omega-N-methylarginine. Residue Arg-343 is modified to Asymmetric dimethylarginine; alternate. Arg-343 is modified (dimethylated arginine; alternate). Arg-343 carries the post-translational modification Omega-N-methylarginine; alternate.

Identified in a IGF2BP1-dependent mRNP granule complex containing untranslated mRNAs. Part of a complex associated with the FOS mCRD domain and consisting of PABPC1, PAIP1, CSDE1/UNR and SYNCRIP. Interacts with IGF2BP2. Interacts with GTPBP1. Interacts with EIF4G1; the interaction requires RNA. Interacts with EIF3B and RPS3. Post-translationally, methylated by PRMT1, in an insulin-dependent manner. The PRMT1-mediated methylation regulates its phosphorylation. In terms of processing, arg-343 is dimethylated, probably to asymmetric dimethylarginine.

It localises to the nucleus. The protein resides in the cytoplasm. Functionally, binds with high affinity to RNA molecules that contain AU-rich elements (AREs) found within the 3'-UTR of many proto-oncogenes and cytokine mRNAs. Also binds to double- and single-stranded DNA sequences in a specific manner and functions a transcription factor. Each of the RNA-binding domains specifically can bind solely to a single-stranded non-monotonous 5'-UUAG-3' sequence and also weaker to the single-stranded 5'-TTAGGG-3' telomeric DNA repeat. Binds RNA oligonucleotides with 5'-UUAGGG-3' repeats more tightly than the telomeric single-stranded DNA 5'-TTAGGG-3' repeats. Binding of RRM1 to DNA inhibits the formation of DNA quadruplex structure which may play a role in telomere elongation. May be involved in translationally coupled mRNA turnover. Implicated with other RNA-binding proteins in the cytoplasmic deadenylation/translational and decay interplay of the FOS mRNA mediated by the major coding-region determinant of instability (mCRD) domain. May play a role in the regulation of the rhythmic expression of circadian clock core genes. Directly binds to the 3'UTR of CRY1 mRNA and induces CRY1 rhythmic translation. May also be involved in the regulation of PER2 translation. In Rattus norvegicus (Rat), this protein is Heterogeneous nuclear ribonucleoprotein D0 (Hnrnpd).